A 658-amino-acid polypeptide reads, in one-letter code: Translation factor GUF1, mitochondrial (658 aa).

The transit peptide at 1–40 (MRGCLQTVRWLTSAWQRPRSYSPLSRAAPCRFFNVSIPRN) directs the protein to the mitochondrion. A tr-type G domain is found at 60–240 (DRFRNFCIVA…TVVEQIPAPV (181 aa)). GTP is bound by residues 69–76 (AHVDHGKS), 133–137 (DTPGH), and 187–190 (NKVD).

The protein belongs to the TRAFAC class translation factor GTPase superfamily. Classic translation factor GTPase family. LepA subfamily.

The protein resides in the mitochondrion inner membrane. The enzyme catalyses GTP + H2O = GDP + phosphate + H(+). In terms of biological role, promotes mitochondrial protein synthesis. May act as a fidelity factor of the translation reaction, by catalyzing a one-codon backward translocation of tRNAs on improperly translocated ribosomes. Binds to mitochondrial ribosomes in a GTP-dependent manner. The polypeptide is Translation factor GUF1, mitochondrial (Paracoccidioides lutzii (strain ATCC MYA-826 / Pb01) (Paracoccidioides brasiliensis)).